Here is a 231-residue protein sequence, read N- to C-terminus: MADLNGAYYGPSIPPPKKVSHSHGRRGGGCGCLGDCLGCCGCCILSVIFNILITIAVLLGIAALIIWLIFRPNAIKFHVTDAKLTEFTLDPTNNLRYNLDLNFTIRNPNRRIGVYYDEIEVRGYYGDQRFGMSNNISKFYQGHKNTTVVGTKLVGQQLVLLDGGERKDLNEDVNSQIYRIDAKLRLKIRFKFGLIKSWRFKPKIKCDLKVPLTSNSTSGFVFQPTKCDVDF.

A helical membrane pass occupies residues 47 to 67 (VIFNILITIAVLLGIAALIIW). N-linked (GlcNAc...) asparagine glycans are attached at residues N102, N135, N145, and N215.

As to quaternary structure, may form oligomers or be a component of larger protein complex in plasma membranes. In terms of processing, glycosylated. Expressed in roots, young and senescing leaves, cauline leaves, stems and siliques.

The protein localises to the cell membrane. Its function is as follows. Confers resistance to Pseudomonas syringae pv. tomato DC3000 (Pst DC3000). The sequence is that of NDR1/HIN1-like protein 3 from Arabidopsis thaliana (Mouse-ear cress).